The sequence spans 207 residues: Outer-membrane lipoprotein LolB (207 aa).

Residues 1 to 23 form the signal peptide; that stretch reads MINLRRFTKFTLAGLTALSLLGG. Residue Cys-24 is the site of N-palmitoyl cysteine attachment. The S-diacylglycerol cysteine moiety is linked to residue Cys-24.

This sequence belongs to the LolB family. As to quaternary structure, monomer.

The protein localises to the cell outer membrane. Functionally, plays a critical role in the incorporation of lipoproteins in the outer membrane after they are released by the LolA protein. The chain is Outer-membrane lipoprotein LolB from Shewanella amazonensis (strain ATCC BAA-1098 / SB2B).